Consider the following 314-residue polypeptide: 4-hydroxy-3-methylbut-2-enyl diphosphate reductase (314 aa).

Cys12 lines the [4Fe-4S] cluster pocket. His43 and His81 together coordinate (2E)-4-hydroxy-3-methylbut-2-enyl diphosphate. Dimethylallyl diphosphate-binding residues include His43 and His81. The isopentenyl diphosphate site is built by His43 and His81. Cys103 contacts [4Fe-4S] cluster. His131 lines the (2E)-4-hydroxy-3-methylbut-2-enyl diphosphate pocket. His131 contributes to the dimethylallyl diphosphate binding site. Position 131 (His131) interacts with isopentenyl diphosphate. Residue Glu133 is the Proton donor of the active site. A (2E)-4-hydroxy-3-methylbut-2-enyl diphosphate-binding site is contributed by Thr170. Cys198 is a binding site for [4Fe-4S] cluster. The (2E)-4-hydroxy-3-methylbut-2-enyl diphosphate site is built by Ser226, Asn228, and Ser271. Positions 226, 228, and 271 each coordinate dimethylallyl diphosphate. 3 residues coordinate isopentenyl diphosphate: Ser226, Asn228, and Ser271.

This sequence belongs to the IspH family. The cofactor is [4Fe-4S] cluster.

The catalysed reaction is isopentenyl diphosphate + 2 oxidized [2Fe-2S]-[ferredoxin] + H2O = (2E)-4-hydroxy-3-methylbut-2-enyl diphosphate + 2 reduced [2Fe-2S]-[ferredoxin] + 2 H(+). It carries out the reaction dimethylallyl diphosphate + 2 oxidized [2Fe-2S]-[ferredoxin] + H2O = (2E)-4-hydroxy-3-methylbut-2-enyl diphosphate + 2 reduced [2Fe-2S]-[ferredoxin] + 2 H(+). Its pathway is isoprenoid biosynthesis; dimethylallyl diphosphate biosynthesis; dimethylallyl diphosphate from (2E)-4-hydroxy-3-methylbutenyl diphosphate: step 1/1. It functions in the pathway isoprenoid biosynthesis; isopentenyl diphosphate biosynthesis via DXP pathway; isopentenyl diphosphate from 1-deoxy-D-xylulose 5-phosphate: step 6/6. In terms of biological role, catalyzes the conversion of 1-hydroxy-2-methyl-2-(E)-butenyl 4-diphosphate (HMBPP) into a mixture of isopentenyl diphosphate (IPP) and dimethylallyl diphosphate (DMAPP). Acts in the terminal step of the DOXP/MEP pathway for isoprenoid precursor biosynthesis. This Bacillus licheniformis (strain ATCC 14580 / DSM 13 / JCM 2505 / CCUG 7422 / NBRC 12200 / NCIMB 9375 / NCTC 10341 / NRRL NRS-1264 / Gibson 46) protein is 4-hydroxy-3-methylbut-2-enyl diphosphate reductase.